A 403-amino-acid chain; its full sequence is Glutamyl-tRNA reductase 2 (403 aa).

Residues 47-50, Ser-98, 103-105, and Gln-109 contribute to the substrate site; these read TCHR and ETD. The active-site Nucleophile is the Cys-48. 177–182 is an NADP(+) binding site; sequence GAGAVG.

The protein belongs to the glutamyl-tRNA reductase family. Homodimer.

It carries out the reaction (S)-4-amino-5-oxopentanoate + tRNA(Glu) + NADP(+) = L-glutamyl-tRNA(Glu) + NADPH + H(+). It functions in the pathway porphyrin-containing compound metabolism; protoporphyrin-IX biosynthesis; 5-aminolevulinate from L-glutamyl-tRNA(Glu): step 1/2. Functionally, catalyzes the NADPH-dependent reduction of glutamyl-tRNA(Glu) to glutamate 1-semialdehyde (GSA). The sequence is that of Glutamyl-tRNA reductase 2 from Pyrobaculum arsenaticum (strain DSM 13514 / JCM 11321 / PZ6).